A 393-amino-acid polypeptide reads, in one-letter code: Argininosuccinate synthase (393 aa).

ATP is bound by residues A7–S15 and A34. L-citrulline-binding residues include Y85 and S90. G115 contributes to the ATP binding site. L-aspartate-binding residues include T117, N121, and D122. N121 contributes to the L-citrulline binding site. 5 residues coordinate L-citrulline: R125, S176, S185, E261, and Y273.

It belongs to the argininosuccinate synthase family. Type 1 subfamily. Homotetramer.

The protein localises to the cytoplasm. The enzyme catalyses L-citrulline + L-aspartate + ATP = 2-(N(omega)-L-arginino)succinate + AMP + diphosphate + H(+). Its pathway is amino-acid biosynthesis; L-arginine biosynthesis; L-arginine from L-ornithine and carbamoyl phosphate: step 2/3. This chain is Argininosuccinate synthase, found in Ehrlichia canis (strain Jake).